The sequence spans 236 residues: MGQKINPIGLRLGVNRTWDSRWYADSGEYGRLLHEDLRIRSYVLEELRQAAISKVVIERPHKKCRVTIHSARPGLIIGKKGADIEKLRRKLSEMTNAETSLNIVEIRKPEIDATIIAQSIAQQLERRVAFRRAMKRAVQSAMRLGAEGIRINCSGRLGGAEIARMEWYREGRVPLHTLRSDVDYGTAEAKTAYGICGIKVWVFKGEILEHDPMASERRATEADQSGSSSNRRRENA.

The KH type-2 domain occupies Ile-39–Arg-107. Positions Ala-214–Ala-236 are disordered.

The protein belongs to the universal ribosomal protein uS3 family. Part of the 30S ribosomal subunit. Forms a tight complex with proteins S10 and S14.

Binds the lower part of the 30S subunit head. Binds mRNA in the 70S ribosome, positioning it for translation. In Bartonella tribocorum (strain CIP 105476 / IBS 506), this protein is Small ribosomal subunit protein uS3.